Consider the following 440-residue polypeptide: Chromosome partition protein MukF (440 aa).

The tract at residues 208–236 is leucine-zipper; that stretch reads LSETSGTLRELQDTLEAAGDKLQANLLRI.

The protein belongs to the MukF family. Interacts, and probably forms a ternary complex, with MukE and MukB via its C-terminal region. The complex formation is stimulated by calcium or magnesium. It is required for an interaction between MukE and MukB.

The protein localises to the cytoplasm. It is found in the nucleoid. Its function is as follows. Involved in chromosome condensation, segregation and cell cycle progression. May participate in facilitating chromosome segregation by condensation DNA from both sides of a centrally located replisome during cell division. Not required for mini-F plasmid partitioning. Probably acts via its interaction with MukB and MukE. Overexpression results in anucleate cells. It has a calcium binding activity. This chain is Chromosome partition protein MukF, found in Citrobacter koseri (strain ATCC BAA-895 / CDC 4225-83 / SGSC4696).